We begin with the raw amino-acid sequence, 575 residues long: Cyclic nucleotide-gated channel alpha-4 (575 aa).

Topologically, residues 1–38 (MSQDSKVKTTESTPPAPTKARKWLPVLDPSGDYYYWWL) are cytoplasmic. The helical transmembrane segment at 39–60 (NTMVFPIMYNLIIVVCRACFPD) threads the bilayer. Residues 61–70 (LQHSYLVAWF) are Extracellular-facing. Residues 71 to 91 (VLDYTSDLLYLLDIGVRFHTG) form a helical membrane-spanning segment. Topologically, residues 92–116 (FLEQGILVVDKSMIASRYVRTWSFL) are cytoplasmic. The helical transmembrane segment at 117–135 (LDLASLVPTDAAYVQLGPH) threads the bilayer. The Extracellular portion of the chain corresponds to 136 to 140 (IPTLR). The helical transmembrane segment at 141–159 (LNRFLRVPRLFEAFDRTET) threads the bilayer. Residues 160–166 (RTAYPNA) are Cytoplasmic-facing. Residues 164-272 (PNAFRIAKLM…GSMSSVIYNM (109 aa)) are ion conduction pathway. The helical transmembrane segment at 167 to 190 (FRIAKLMIYIFVVIHWNSCLYFAL) threads the bilayer. Residues 191 to 213 (SRYLGFGRDAWVYPDPAQPGFER) lie on the Extracellular side of the membrane. 2 consecutive transmembrane segments (helical) span residues 214 to 248 (LRRQ…LFMV) and 249 to 273 (GDFL…YNMN). The tract at residues 231-234 (TVGD) is selectivity filter. Positions 274 to 350 (TADAAFYPDH…STLSRVQIFQ (77 aa)) are C-linker. Residues 274–575 (TADAAFYPDH…AGQEGPSGLE (302 aa)) lie on the Cytoplasmic side of the membrane. The IQ-type signature appears at 292 to 302 (LQHVNRRLERR). Residue 348 to 471 (IFQNCEASLL…AVMEEKGREI (124 aa)) participates in a nucleoside 3',5'-cyclic phosphate binding. The segment at 354 to 474 (ASLLEELVLK…EEKGREILLK (121 aa)) is cyclic nucleotide-binding domain. The 3',5'-cyclic GMP site is built by glycine 414, serine 417, arginine 430, and threonine 431. The 3',5'-cyclic AMP site is built by arginine 430 and threonine 431. The stretch at 493-547 (TESRLKGLDQQLDDLQTKFARLLAELESSALKIAYRIERLEWQTREWPMPDDMGE) forms a coiled coil. Residues 536–575 (TREWPMPDDMGEADDEAEPGEGTSKDGEEKAGQEGPSGLE) form a disordered region. The segment covering 544 to 554 (DMGEADDEAEP) has biased composition (acidic residues). Basic and acidic residues predominate over residues 558–567 (TSKDGEEKAG).

The protein belongs to the cyclic nucleotide-gated cation channel (TC 1.A.1.5) family. CNGA4 subfamily. In terms of assembly, the olfactory cyclic nucleotide-gated channel is an heterotetramer composed of CNGA2, CNGA4 and CNGB1b subunits with 2:1:1 stoichiometry. Expressed in the olfactory epithelium.

It is found in the cell projection. Its subcellular location is the cilium membrane. It carries out the reaction Ca(2+)(in) = Ca(2+)(out). The catalysed reaction is Na(+)(in) = Na(+)(out). The enzyme catalyses K(+)(in) = K(+)(out). It catalyses the reaction NH4(+)(in) = NH4(+)(out). It carries out the reaction Rb(+)(in) = Rb(+)(out). The catalysed reaction is Li(+)(in) = Li(+)(out). The enzyme catalyses Cs(+)(in) = Cs(+)(out). With respect to regulation, ca(2+)-calmodulin exerts its inhibitory effect in cAMP sensitivity by binding to IQ-like motif of CNGA4 and preferably binds to the channel in the closed state. Inhibition by PIP3 of the CNG channel probably occurs via CGNA2 binding. Pore-forming subunit of the olfactory cyclic nucleotide-gated channel. Operates in the cilia of olfactory sensory neurons where chemical stimulation of the odorant is converted to an electrical signal. Mediates odorant-induced cAMP-dependent Ca(2+) influx triggering neuron depolarization. The rise of intracellular Ca(2+) levels potentiates the olfactory response by activating Ca(2+)-dependent Cl(-) channels, but it also serves as a negative feedback signal to desensitize the channel for rapid adaptation to odorants. Conducts cGMP- and cAMP-gated ion currents, with permeability for monovalent and divalent cations. Conducts cAMP- and cGMP-gated ion currents, with permeability for monovalent and divalent cations. May conduct nitric oxide-gated Ca(2+) currents relevant to neurons of vomeronasal organ, a system involved in the perception of pheromones. The polypeptide is Cyclic nucleotide-gated channel alpha-4 (Mus musculus (Mouse)).